The chain runs to 370 residues: Glutamate 5-kinase (370 aa).

An ATP-binding site is contributed by Lys-13. Substrate contacts are provided by Ser-52, Asp-139, and Asn-151. Residues 171–172 (SD) and 211–217 (SGGMKSK) contribute to the ATP site. The PUA domain maps to 275-353 (KGELVLDRGA…AEIEAVLGYR (79 aa)).

The protein belongs to the glutamate 5-kinase family.

The protein resides in the cytoplasm. It carries out the reaction L-glutamate + ATP = L-glutamyl 5-phosphate + ADP. Its pathway is amino-acid biosynthesis; L-proline biosynthesis; L-glutamate 5-semialdehyde from L-glutamate: step 1/2. Catalyzes the transfer of a phosphate group to glutamate to form L-glutamate 5-phosphate. The chain is Glutamate 5-kinase from Thermus thermophilus (strain ATCC BAA-163 / DSM 7039 / HB27).